The primary structure comprises 315 residues: Gamma-hemolysin component C (315 aa).

A signal peptide spans 1 to 29 (MLKNKILTTTLSVSLLAPLANPLLENAKA).

Belongs to the aerolysin family. As to quaternary structure, toxicity requires sequential binding and synergistic association of a class S and a class F component which form heterooligomeric complexes. HlgC (class S) associates with HlgB (class F) thus forming an CB toxin.

Functionally, toxin that seems to act by forming pores in the membrane of the cell. Has a hemolytic and a leucotoxic activity. The polypeptide is Gamma-hemolysin component C (hlgC) (Staphylococcus aureus (strain COL)).